A 159-amino-acid chain; its full sequence is Ribosomal RNA large subunit methyltransferase H (159 aa).

Residues L76, G108, and 127–132 (FSKMTF) contribute to the S-adenosyl-L-methionine site.

The protein belongs to the RNA methyltransferase RlmH family. Homodimer.

It is found in the cytoplasm. It catalyses the reaction pseudouridine(1915) in 23S rRNA + S-adenosyl-L-methionine = N(3)-methylpseudouridine(1915) in 23S rRNA + S-adenosyl-L-homocysteine + H(+). In terms of biological role, specifically methylates the pseudouridine at position 1915 (m3Psi1915) in 23S rRNA. The sequence is that of Ribosomal RNA large subunit methyltransferase H from Clostridium botulinum (strain Okra / Type B1).